The chain runs to 860 residues: Linoleate 9S-lipoxygenase A (860 aa).

The 131-residue stretch at 29-159 (NALDFTDLAG…RYKSDRIFFA (131 aa)) folds into the PLAT domain. The region spanning 162-860 (PYLPSETPEL…GKGIPNSVSI (699 aa)) is the Lipoxygenase domain. The tract at residues 209–246 (PDQGKENVRTTLGGSADYPYPRRGRTGRPPTRTDPKSE) is disordered. Fe cation is bound by residues His521, His526, His712, Asn716, and Ile860.

The protein belongs to the lipoxygenase family. In terms of assembly, monomer. Requires Fe cation as cofactor. As to expression, expressed in germinating seeds as well as in ripening fruit.

It localises to the cytoplasm. The enzyme catalyses (9Z,12Z)-octadecadienoate + O2 = (9S)-hydroperoxy-(10E,12Z)-octadecadienoate. It functions in the pathway lipid metabolism; oxylipin biosynthesis. Functionally, plant lipoxygenase may be involved in a number of diverse aspects of plant physiology including growth and development, pest resistance, and senescence or responses to wounding. It catalyzes the hydroperoxidation of lipids containing a cis,cis-1,4-pentadiene structure. The protein is Linoleate 9S-lipoxygenase A (LOX1.1) of Solanum lycopersicum (Tomato).